Reading from the N-terminus, the 622-residue chain is Pyranose 2-oxidase (622 aa).

The signal sequence occupies residues 1–28 (MSTSSSDPFYNFAKTSFKSAAAQKASAT). Positions 29-38 (SLPPLPGPDQ) are excised as a propeptide. Residue His-167 is modified to Tele-8alpha-FAD histidine. Residues Gln-448 and His-450 each coordinate substrate. Residue His-548 is the Proton acceptor of the active site. The active site involves Asn-593.

This sequence belongs to the GMC oxidoreductase family. As to quaternary structure, homotetramer. FAD is required as a cofactor.

Its subcellular location is the periplasm. It catalyses the reaction D-glucose + O2 = 2-dehydro-D-glucose + H2O2. Its function is as follows. Catalyzes the oxidation of various aldopyranoses and disaccharides on carbon-2 to the corresponding 2-keto sugars concomitant with the reduction of O(2) to H(2)O(2). Plays an important role in lignin degradation of wood rot fungi by supplying the essential cosubstrate H(2)O(2) for the ligninolytic peroxidases, lignin peroxidase and manganese-dependent peroxidase. The chain is Pyranose 2-oxidase (p2ox) from Trametes pubescens (White-rot fungus).